We begin with the raw amino-acid sequence, 182 residues long: Chromophore lyase CpcS/CpeS (182 aa).

This sequence belongs to the CpcS/CpeS biliprotein lyase family.

Its function is as follows. Covalently attaches a chromophore to Cys residue(s) of phycobiliproteins. This is Chromophore lyase CpcS/CpeS from Thermosynechococcus vestitus (strain NIES-2133 / IAM M-273 / BP-1).